The sequence spans 155 residues: SsrA-binding protein (155 aa).

Residues 132–155 (DKREDLKQKQMKRDVDRAIKDHMR) form a disordered region.

The protein belongs to the SmpB family.

It is found in the cytoplasm. Its function is as follows. Required for rescue of stalled ribosomes mediated by trans-translation. Binds to transfer-messenger RNA (tmRNA), required for stable association of tmRNA with ribosomes. tmRNA and SmpB together mimic tRNA shape, replacing the anticodon stem-loop with SmpB. tmRNA is encoded by the ssrA gene; the 2 termini fold to resemble tRNA(Ala) and it encodes a 'tag peptide', a short internal open reading frame. During trans-translation Ala-aminoacylated tmRNA acts like a tRNA, entering the A-site of stalled ribosomes, displacing the stalled mRNA. The ribosome then switches to translate the ORF on the tmRNA; the nascent peptide is terminated with the 'tag peptide' encoded by the tmRNA and targeted for degradation. The ribosome is freed to recommence translation, which seems to be the essential function of trans-translation. The protein is SsrA-binding protein of Oceanobacillus iheyensis (strain DSM 14371 / CIP 107618 / JCM 11309 / KCTC 3954 / HTE831).